The chain runs to 1097 residues: DNA-directed RNA polymerase subunit beta (1097 aa).

Residues 1070-1097 form a disordered region; sequence LMQDVNPRRNTPSRPTYESLGTSEYEED. The segment covering 1077 to 1091 has biased composition (polar residues); sequence RRNTPSRPTYESLGT.

This sequence belongs to the RNA polymerase beta chain family. As to quaternary structure, in cyanobacteria the RNAP catalytic core is composed of 2 alpha, 1 beta, 1 beta', 1 gamma and 1 omega subunit. When a sigma factor is associated with the core the holoenzyme is formed, which can initiate transcription.

The enzyme catalyses RNA(n) + a ribonucleoside 5'-triphosphate = RNA(n+1) + diphosphate. DNA-dependent RNA polymerase catalyzes the transcription of DNA into RNA using the four ribonucleoside triphosphates as substrates. The chain is DNA-directed RNA polymerase subunit beta from Prochlorococcus marinus (strain MIT 9515).